A 432-amino-acid polypeptide reads, in one-letter code: Trigger factor (432 aa).

In terms of domain architecture, PPIase FKBP-type spans 161-246 (EDRVTIDFTG…LKKVEERELP (86 aa)).

It belongs to the FKBP-type PPIase family. Tig subfamily.

It localises to the cytoplasm. The catalysed reaction is [protein]-peptidylproline (omega=180) = [protein]-peptidylproline (omega=0). Its function is as follows. Involved in protein export. Acts as a chaperone by maintaining the newly synthesized protein in an open conformation. Functions as a peptidyl-prolyl cis-trans isomerase. The protein is Trigger factor of Klebsiella pneumoniae (strain 342).